The chain runs to 257 residues: NAD-capped RNA hydrolase NudC (257 aa).

Position 69 (Arg69) interacts with substrate. Zn(2+) is bound by residues Cys98 and Cys101. Residue Glu111 coordinates substrate. Residues Cys116 and Cys119 each coordinate Zn(2+). Tyr124 serves as a coordination point for substrate. The region spanning 125-248 (PQIAPCIIVA…TVARRLIEDT (124 aa)) is the Nudix hydrolase domain. Residues Ala158, Glu174, and Glu178 each coordinate a divalent metal cation. The Nudix box motif lies at 159 to 180 (GFVEVGETLEQAVAREVMEESG). 192–199 (QPWPFPQS) is a binding site for substrate. An a divalent metal cation-binding site is contributed by Glu219. Ala241 provides a ligand contact to substrate.

It belongs to the Nudix hydrolase family. NudC subfamily. As to quaternary structure, homodimer. Requires Mg(2+) as cofactor. The cofactor is Mn(2+). Zn(2+) serves as cofactor.

It catalyses the reaction a 5'-end NAD(+)-phospho-ribonucleoside in mRNA + H2O = a 5'-end phospho-adenosine-phospho-ribonucleoside in mRNA + beta-nicotinamide D-ribonucleotide + 2 H(+). It carries out the reaction NAD(+) + H2O = beta-nicotinamide D-ribonucleotide + AMP + 2 H(+). The catalysed reaction is NADH + H2O = reduced beta-nicotinamide D-ribonucleotide + AMP + 2 H(+). Functionally, mRNA decapping enzyme that specifically removes the nicotinamide adenine dinucleotide (NAD) cap from a subset of mRNAs by hydrolyzing the diphosphate linkage to produce nicotinamide mononucleotide (NMN) and 5' monophosphate mRNA. The NAD-cap is present at the 5'-end of some mRNAs and stabilizes RNA against 5'-processing. Has preference for mRNAs with a 5'-end purine. Catalyzes the hydrolysis of a broad range of dinucleotide pyrophosphates. The chain is NAD-capped RNA hydrolase NudC from Salmonella choleraesuis (strain SC-B67).